We begin with the raw amino-acid sequence, 548 residues long: Chaperonin GroEL (548 aa).

ATP-binding positions include 30-33 (TLGP), Lys51, 87-91 (DGTTT), Gly415, 479-481 (NAA), and Asp495.

It belongs to the chaperonin (HSP60) family. As to quaternary structure, forms a cylinder of 14 subunits composed of two heptameric rings stacked back-to-back. Interacts with the co-chaperonin GroES. Post-translationally, UMPylated on a tyrosine residue by YdiU under ATP-limited conditions.

The protein localises to the cytoplasm. The enzyme catalyses ATP + H2O + a folded polypeptide = ADP + phosphate + an unfolded polypeptide.. Its activity is regulated as follows. UMPylation of the chaperone by YdiU negatively regulates its activity, facilitating Salmonella survival under ATP-limited conditions. In terms of biological role, together with its co-chaperonin GroES, plays an essential role in assisting protein folding. The GroEL-GroES system forms a nano-cage that allows encapsulation of the non-native substrate proteins and provides a physical environment optimized to promote and accelerate protein folding. The polypeptide is Chaperonin GroEL (Salmonella typhimurium (strain LT2 / SGSC1412 / ATCC 700720)).